A 91-amino-acid polypeptide reads, in one-letter code: Acylphosphatase (91 aa).

One can recognise an Acylphosphatase-like domain in the interval 3-89 (TLLVRISGKV…PDQPGFSQKP (87 aa)). Catalysis depends on residues R18 and N36.

Belongs to the acylphosphatase family.

It catalyses the reaction an acyl phosphate + H2O = a carboxylate + phosphate + H(+). This Rhodospirillum rubrum (strain ATCC 11170 / ATH 1.1.1 / DSM 467 / LMG 4362 / NCIMB 8255 / S1) protein is Acylphosphatase (acyP).